A 423-amino-acid polypeptide reads, in one-letter code: Diaminobutyrate--2-oxoglutarate transaminase (423 aa).

Lys267 carries the N6-(pyridoxal phosphate)lysine modification.

Belongs to the class-III pyridoxal-phosphate-dependent aminotransferase family. Homohexamer. Pyridoxal 5'-phosphate is required as a cofactor.

It carries out the reaction L-2,4-diaminobutanoate + 2-oxoglutarate = L-aspartate 4-semialdehyde + L-glutamate. It participates in amine and polyamine biosynthesis; ectoine biosynthesis; L-ectoine from L-aspartate 4-semialdehyde: step 1/3. Functionally, catalyzes reversively the conversion of L-aspartate beta-semialdehyde (ASA) to L-2,4-diaminobutyrate (DABA) by transamination with L-glutamate. The polypeptide is Diaminobutyrate--2-oxoglutarate transaminase (ectB) (Chromohalobacter salexigens (strain ATCC BAA-138 / DSM 3043 / CIP 106854 / NCIMB 13768 / 1H11)).